Consider the following 133-residue polypeptide: U6 snRNA-associated Sm-like protein LSm1 (133 aa).

The region spanning 5–80 is the Sm domain; sequence PGTASLIEDI…VVLLGEIDLE (76 aa). A Phosphoserine modification is found at serine 123. Residue threonine 129 is modified to Phosphothreonine.

This sequence belongs to the snRNP Sm proteins family. As to quaternary structure, interacts with SLBP; interaction with SLBP occurs when histone mRNA is being rapidly degraded during the S phase. LSm subunits form a heteromer with a donut shape.

The protein resides in the cytoplasm. Its subcellular location is the P-body. Functionally, plays a role in the degradation of histone mRNAs, the only eukaryotic mRNAs that are not polyadenylated. Probably also part of an LSm subunits-containing complex involved in the general process of mRNA degradation. The sequence is that of U6 snRNA-associated Sm-like protein LSm1 (LSM1) from Homo sapiens (Human).